The following is a 109-amino-acid chain: Nucleoid-associated protein Ldb1634 (109 aa).

Positions 18–40 (MMKQAKKLQEQMAQEQENITTQE) are disordered.

Belongs to the YbaB/EbfC family. In terms of assembly, homodimer.

The protein localises to the cytoplasm. It localises to the nucleoid. In terms of biological role, binds to DNA and alters its conformation. May be involved in regulation of gene expression, nucleoid organization and DNA protection. The sequence is that of Nucleoid-associated protein Ldb1634 from Lactobacillus delbrueckii subsp. bulgaricus (strain ATCC 11842 / DSM 20081 / BCRC 10696 / JCM 1002 / NBRC 13953 / NCIMB 11778 / NCTC 12712 / WDCM 00102 / Lb 14).